A 141-amino-acid polypeptide reads, in one-letter code: Hemoglobin subunit alpha-1/2 (141 aa).

The region spanning 1-141 (VLSAABKSBV…VSTVLTSKYR (141 aa)) is the Globin domain. A Phosphoserine modification is found at Ser3. N6-succinyllysine is present on residues Lys7 and Lys11. Lys16 is modified (N6-acetyllysine; alternate). Lys16 carries the N6-succinyllysine; alternate modification. Tyr24 bears the Phosphotyrosine mark. Ser35 bears the Phosphoserine mark. Lys40 carries the N6-succinyllysine modification. Ser49 carries the phosphoserine modification. Residue His58 coordinates O2. His87 contacts heme b. Ser102 carries the phosphoserine modification. Thr108 carries the phosphothreonine modification. Ser124 is subject to Phosphoserine. Residues Thr134 and Thr137 each carry the phosphothreonine modification. Ser138 bears the Phosphoserine mark.

It belongs to the globin family. In terms of assembly, heterotetramer of two alpha chains and two beta chains. In terms of tissue distribution, red blood cells.

Functionally, involved in oxygen transport from the lung to the various peripheral tissues. This chain is Hemoglobin subunit alpha-1/2, found in Odocoileus virginianus virginianus (Virginia white-tailed deer).